The primary structure comprises 314 residues: MGWALKKVCFLGVIFLISACTVKKNGVKNLSYKHESLRAYENAKDYDPTTKKATYKRNFFERHFKHHTDSQGNNTKQPLDNGMRDSNAIQRATMHPYQVGGKWYYPTKVDLGEKFDGIASWYGPNFHAKKTSNGEIYNMYAHTAAHKTLPMNTVVKVINVDNNSSTIVRINDRGPFVSNRIIDLSNAAARDIDMVQKGTASVRLIVLGFGGVISKQYEQSFNANYSKILHKEFKVGESEKSVSGGKFSLQMGAFRNQIGAQTLADKLQAENKNYSVKVAFKDDLYKVLVQGFQSEEEARDFMKKYNQNAVLTRE.

The N-terminal stretch at Met-1 to Ala-19 is a signal peptide. Cys-20 carries the N-palmitoyl cysteine lipid modification. Residue Cys-20 is the site of S-diacylglycerol cysteine attachment. Positions Ser-241–Glu-314 constitute an SPOR domain.

This sequence belongs to the RlpA family.

The protein localises to the cell membrane. Its function is as follows. Lytic transglycosylase with a strong preference for naked glycan strands that lack stem peptides. The polypeptide is Endolytic peptidoglycan transglycosylase RlpA (Helicobacter pylori (strain J99 / ATCC 700824) (Campylobacter pylori J99)).